The sequence spans 335 residues: Probable BOI-related E3 ubiquitin-protein ligase 3 (335 aa).

Residues leucine 196–leucine 232 form a WRD domain region. The RING-type zinc-finger motif lies at cysteine 287–lysine 322.

Interacts with the DELLA proteins GAI, RGA, RGL1, RGL2 and RGL3.

The enzyme catalyses S-ubiquitinyl-[E2 ubiquitin-conjugating enzyme]-L-cysteine + [acceptor protein]-L-lysine = [E2 ubiquitin-conjugating enzyme]-L-cysteine + N(6)-ubiquitinyl-[acceptor protein]-L-lysine.. It participates in protein degradation; proteasomal ubiquitin-dependent pathway. Its function is as follows. Probable E3 ubiquitin-protein ligase. Has no effect on the stability of the DELLA proteins. The sequence is that of Probable BOI-related E3 ubiquitin-protein ligase 3 (BRG3) from Arabidopsis thaliana (Mouse-ear cress).